A 78-amino-acid chain; its full sequence is Large ribosomal subunit protein bL28 (78 aa).

Positions methionine 1–asparagine 30 are disordered. Positions serine 19–asparagine 30 are enriched in basic residues.

The protein belongs to the bacterial ribosomal protein bL28 family.

This Kocuria rhizophila (strain ATCC 9341 / DSM 348 / NBRC 103217 / DC2201) protein is Large ribosomal subunit protein bL28.